Consider the following 265-residue polypeptide: Polyglutamine-binding protein 1 (265 aa).

One can recognise a WW domain in the interval 46–80; the sequence is EGLPPSWYKVFDPSCGLPYYWNADTDLVSWLSPHD. S94 is modified (phosphoserine). Residues 94-265 are disordered; the sequence is SSNADAEEKL…AEASRTKQQD (172 aa). A compositionally biased stretch (basic and acidic residues) spans 99–175; sequence AEEKLDRSHD…DKADREEGKE (77 aa). Repeat copies occupy residues 104–110, 111–117, 118–124, 125–131, 132–138, 139–140, 141–142, 143–144, 150–151, 152–153, 154–155, 156–157, 158–159, 160–161, and 162–163. Residues 104 to 138 form a 5 X 7 AA approximate tandem repeats of D-R-[SG]-H-D-K-S region; it reads DRSHDKSDRGHDKSDRSHEKLDRGHDKSDRGHDKS. Residues 139–144 form a 3 X 2 AA tandem repeats of [DE]-R region; the sequence is DRDRER. The interval 150–163 is 7 X 2 AA tandem repeats of [DE]-R; the sequence is DRERERDRERDRDR. The important for interaction with TXNL4A stretch occupies residues 245–255; the sequence is YPSPGAVLRAN. S247 is modified (phosphoserine).

Interacts with POU3F2/Brn-2, ATXN1, TXNL4A, HTT and AR. Interaction with ATXN1 correlates positively with the length of the polyglutamine tract. Interacts with RNA polymerase II large subunit in a phosphorylation-dependent manner. Forms a ternary complex with ATXN1 mutant and phosphorylated RNA polymerase II. Interacts (via C-terminus) with TXNL4A and CD2BP2. Interacts (via WW domain) with ATN1 and SF3B1, and may interact with additional splice factors. Interacts (via WW domain) with WBP11; Leading to reduce interaction between PQBP1 and TXNL4A. Interacts with CAPRIN1. Interacts with DDX1. Interacts with SFPQ. Interacts with KHSRP.

It is found in the nucleus. Its subcellular location is the nucleus speckle. It localises to the cytoplasmic granule. Functionally, intrinsically disordered protein that acts as a scaffold, and which is involved in different processes, such as pre-mRNA splicing, transcription regulation, innate immunity and neuron development. Interacts with splicing-related factors via the intrinsically disordered region and regulates alternative splicing of target pre-mRNA species. May suppress the ability of POU3F2 to transactivate the DRD1 gene in a POU3F2 dependent manner. Can activate transcription directly or via association with the transcription machinery. May be involved in ATXN1 mutant-induced cell death. The interaction with ATXN1 mutant reduces levels of phosphorylated RNA polymerase II large subunit. Involved in the assembly of cytoplasmic stress granule, possibly by participating in the transport of neuronal RNA granules. Also acts as an innate immune sensor of infection by retroviruses, by detecting the presence of reverse-transcribed DNA in the cytosol. Directly binds retroviral reverse-transcribed DNA in the cytosol and interacts with CGAS, leading to activate the cGAS-STING signaling pathway, triggering type-I interferon production. This chain is Polyglutamine-binding protein 1 (PQBP1), found in Gorilla gorilla gorilla (Western lowland gorilla).